Reading from the N-terminus, the 404-residue chain is Arginine biosynthesis bifunctional protein ArgJ (404 aa).

Substrate-binding residues include Thr166, Lys189, Thr200, Glu280, Asn399, and Ser404. Thr200 (nucleophile) is an active-site residue.

The protein belongs to the ArgJ family. Heterotetramer of two alpha and two beta chains.

It is found in the cytoplasm. It catalyses the reaction N(2)-acetyl-L-ornithine + L-glutamate = N-acetyl-L-glutamate + L-ornithine. The enzyme catalyses L-glutamate + acetyl-CoA = N-acetyl-L-glutamate + CoA + H(+). Its pathway is amino-acid biosynthesis; L-arginine biosynthesis; L-ornithine and N-acetyl-L-glutamate from L-glutamate and N(2)-acetyl-L-ornithine (cyclic): step 1/1. The protein operates within amino-acid biosynthesis; L-arginine biosynthesis; N(2)-acetyl-L-ornithine from L-glutamate: step 1/4. In terms of biological role, catalyzes two activities which are involved in the cyclic version of arginine biosynthesis: the synthesis of N-acetylglutamate from glutamate and acetyl-CoA as the acetyl donor, and of ornithine by transacetylation between N(2)-acetylornithine and glutamate. In Mycobacterium bovis (strain ATCC BAA-935 / AF2122/97), this protein is Arginine biosynthesis bifunctional protein ArgJ.